Reading from the N-terminus, the 72-residue chain is Exodeoxyribonuclease 7 small subunit (72 aa).

This sequence belongs to the XseB family. Heterooligomer composed of large and small subunits.

It is found in the cytoplasm. The catalysed reaction is Exonucleolytic cleavage in either 5'- to 3'- or 3'- to 5'-direction to yield nucleoside 5'-phosphates.. In terms of biological role, bidirectionally degrades single-stranded DNA into large acid-insoluble oligonucleotides, which are then degraded further into small acid-soluble oligonucleotides. This is Exodeoxyribonuclease 7 small subunit from Chlamydia trachomatis serovar D (strain ATCC VR-885 / DSM 19411 / UW-3/Cx).